The chain runs to 212 residues: Cytidylate kinase (212 aa).

ATP is bound at residue 9-17 (GPAAAGKGT).

It belongs to the cytidylate kinase family. Type 1 subfamily.

It localises to the cytoplasm. It catalyses the reaction CMP + ATP = CDP + ADP. The catalysed reaction is dCMP + ATP = dCDP + ADP. The polypeptide is Cytidylate kinase (Sinorhizobium medicae (strain WSM419) (Ensifer medicae)).